We begin with the raw amino-acid sequence, 102 residues long: Trp operon repressor homolog (102 aa).

A DNA-binding region spans residues 59–82 (QRQISQMLGVGIATITRGSNELKL).

Belongs to the TrpR family. As to quaternary structure, homodimer.

It is found in the cytoplasm. Functionally, this protein is an aporepressor. When complexed with L-tryptophan it binds the operator region of the trp operon and prevents the initiation of transcription. The chain is Trp operon repressor homolog from Vibrio vulnificus (strain CMCP6).